The primary structure comprises 288 residues: Homoserine kinase (288 aa).

79-89 (PPARGLGSSSA) contacts ATP.

This sequence belongs to the GHMP kinase family. Homoserine kinase subfamily.

It localises to the cytoplasm. The enzyme catalyses L-homoserine + ATP = O-phospho-L-homoserine + ADP + H(+). The protein operates within amino-acid biosynthesis; L-threonine biosynthesis; L-threonine from L-aspartate: step 4/5. Functionally, catalyzes the ATP-dependent phosphorylation of L-homoserine to L-homoserine phosphate. The chain is Homoserine kinase from Listeria monocytogenes serotype 4b (strain CLIP80459).